The following is a 435-amino-acid chain: Chromosomal replication initiator protein DnaA (435 aa).

The interval Met1–Ile70 is domain I, interacts with DnaA modulators. Positions Ile70–Ser98 are domain II. The segment at Leu99–Ser313 is domain III, AAA+ region. Positions 143, 145, 146, and 147 each coordinate ATP. The tract at residues Gln314 to Ser435 is domain IV, binds dsDNA.

Belongs to the DnaA family. As to quaternary structure, oligomerizes as a right-handed, spiral filament on DNA at oriC.

It is found in the cytoplasm. Its function is as follows. Plays an essential role in the initiation and regulation of chromosomal replication. ATP-DnaA binds to the origin of replication (oriC) to initiate formation of the DNA replication initiation complex once per cell cycle. Binds the DnaA box (a 9 base pair repeat at the origin) and separates the double-stranded (ds)DNA. Forms a right-handed helical filament on oriC DNA; dsDNA binds to the exterior of the filament while single-stranded (ss)DNA is stabiized in the filament's interior. The ATP-DnaA-oriC complex binds and stabilizes one strand of the AT-rich DNA unwinding element (DUE), permitting loading of DNA polymerase. After initiation quickly degrades to an ADP-DnaA complex that is not apt for DNA replication. Binds acidic phospholipids. The protein is Chromosomal replication initiator protein DnaA of Sulfurimonas denitrificans (strain ATCC 33889 / DSM 1251) (Thiomicrospira denitrificans (strain ATCC 33889 / DSM 1251)).